Here is a 547-residue protein sequence, read N- to C-terminus: Chaperonin GroEL (547 aa).

ATP-binding positions include 30–33 (TLGP), Lys51, 87–91 (DGTTT), Gly415, 479–481 (NAA), and Asp495.

It belongs to the chaperonin (HSP60) family. As to quaternary structure, forms a cylinder of 14 subunits composed of two heptameric rings stacked back-to-back. Interacts with the co-chaperonin GroES.

It is found in the cytoplasm. It catalyses the reaction ATP + H2O + a folded polypeptide = ADP + phosphate + an unfolded polypeptide.. Functionally, together with its co-chaperonin GroES, plays an essential role in assisting protein folding. The GroEL-GroES system forms a nano-cage that allows encapsulation of the non-native substrate proteins and provides a physical environment optimized to promote and accelerate protein folding. The polypeptide is Chaperonin GroEL (Acinetobacter baumannii (strain ACICU)).